A 466-amino-acid chain; its full sequence is Bifunctional NAD(P)H-hydrate repair enzyme Nnr (466 aa).

The tract at residues 1–207 (MLSVYEKVNA…HLGVFNQIYE (207 aa)) is NAD(P)H-hydrate epimerase. The YjeF N-terminal domain maps to 8 to 207 (VNALDKRAIE…HLGVFNQIYE (200 aa)). The segment at 56–60 (DNGGD) is NADPHX 1; for epimerase activity. 2 residues coordinate K(+): Asn-57 and Asp-120. The interval 124–130 (GSHFKGK) is NADPHX 1; for epimerase activity. Asp-151 contacts (6S)-NADPHX. Ser-154 is a binding site for K(+). In terms of domain architecture, YjeF C-terminal spans 215-466 (LEKSDLKLPL…LDLIEKIKQL (252 aa)). The ADP-dependent (S)-NAD(P)H-hydrate dehydratase stretch occupies residues 215–466 (LEKSDLKLPL…LDLIEKIKQL (252 aa)). Gly-300 lines the (6S)-NADPHX pocket. The segment at 342-348 (HPKEFLS) is NADPHX 2; for dehydratase activity. ADP-binding positions include 385–389 (KGANT) and 404–413 (SVALAKAGSG). Asp-414 serves as a coordination point for (6S)-NADPHX.

In the N-terminal section; belongs to the NnrE/AIBP family. This sequence in the C-terminal section; belongs to the NnrD/CARKD family. The cofactor is K(+).

The enzyme catalyses (6S)-NADHX + ADP = AMP + phosphate + NADH + H(+). It carries out the reaction (6S)-NADPHX + ADP = AMP + phosphate + NADPH + H(+). The catalysed reaction is (6R)-NADHX = (6S)-NADHX. It catalyses the reaction (6R)-NADPHX = (6S)-NADPHX. In terms of biological role, bifunctional enzyme that catalyzes the epimerization of the S- and R-forms of NAD(P)HX and the dehydration of the S-form of NAD(P)HX at the expense of ADP, which is converted to AMP. This allows the repair of both epimers of NAD(P)HX, a damaged form of NAD(P)H that is a result of enzymatic or heat-dependent hydration. The sequence is that of Bifunctional NAD(P)H-hydrate repair enzyme Nnr (nnr) from Helicobacter pylori (strain ATCC 700392 / 26695) (Campylobacter pylori).